Reading from the N-terminus, the 1098-residue chain is Contactin-5 (1098 aa).

The signal sequence occupies residues 1–23 (MASCWRLILFLSVTRWLSDYSEA). Ig-like C2-type domains follow at residues 98 to 189 (PVFV…ATLQ), 195 to 281 (NFSG…RVLS), 299 to 384 (PKIE…GQLQ), 389 to 473 (PHWV…AELK), 479 to 568 (PSFE…LSVK), and 570 to 659 (PTRI…DSVS). A disulfide bridge links Cys-122 with Cys-172. Residues Asn-137 and Asn-195 are each glycosylated (N-linked (GlcNAc...) asparagine). Cystine bridges form between Cys-216–Cys-268 and Cys-321–Cys-368. N-linked (GlcNAc...) asparagine glycosylation is found at Asn-396, Asn-448, and Asn-539. 3 disulfide bridges follow: Cys-410-Cys-457, Cys-502-Cys-550, and Cys-592-Cys-649. 4 Fibronectin type-III domains span residues 672 to 770 (PPGV…TNEA), 775 to 872 (APSN…SAEG), 877 to 971 (APTD…TKRH), and 976 to 1066 (PPGN…SYSG). N-linked (GlcNAc...) asparagine glycosylation is found at Asn-778, Asn-815, and Asn-930. The disordered stretch occupies residues 956–982 (GYGPPSREASTTTKRHPPREPPGNLRW). N-linked (GlcNAc...) asparagine glycosylation is present at Asn-1001. A lipid anchor (GPI-anchor amidated serine) is attached at Ser-1071. Positions 1072-1098 (AQSTLHSLSKWSSVTLLLALMLPSSSW) are cleaved as a propeptide — removed in mature form.

The protein belongs to the immunoglobulin superfamily. Contactin family. As to quaternary structure, interacts with PTPRG. In terms of tissue distribution, expressed in the nervous system. Preferentially expressed in the central auditory pathways.

The protein localises to the cell membrane. Its function is as follows. Contactins mediate cell surface interactions during nervous system development. Has some neurite outgrowth-promoting activity in the cerebral cortical neurons but not in hippocampal neurons. Involved in neuronal activity in the auditory system. The chain is Contactin-5 (Cntn5) from Mus musculus (Mouse).